The primary structure comprises 539 residues: Probable protein kinase UbiB (539 aa).

The region spanning 125–493 (RFDVEPLASA…RRRQGDRWAL (369 aa)) is the Protein kinase domain. ATP is bound by residues 131-139 (LASASVAQV) and K153. D288 acts as the Proton acceptor in catalysis. 2 helical membrane-spanning segments follow: residues 495–515 (LLGAGLLGGGAVLAASAAEAA) and 517–537 (LAAPAAWPAWLMLAAGLYLIV).

The protein belongs to the ABC1 family. UbiB subfamily.

The protein localises to the cell inner membrane. Its pathway is cofactor biosynthesis; ubiquinone biosynthesis [regulation]. Functionally, is probably a protein kinase regulator of UbiI activity which is involved in aerobic coenzyme Q (ubiquinone) biosynthesis. In Pseudomonas putida (strain W619), this protein is Probable protein kinase UbiB.